We begin with the raw amino-acid sequence, 1615 residues long: MAYTQTATTSALLDTVRGNNTLVNDLAKRRLYDTAVDEFNARDRRPKVNFSKVISEEQTLIATRAYPEFQITFYNTQNAVHSLAGGLRSLELEYLMMQIPYGSLTYDIGGNFASHLFKGRAYVHCCMPNLDVRDIMRHEGQKDSIELYLSRLERGNKVVPNFQKEAFDRYAETPDEVVCHSTFQTCTHQQVENTGRVYAIALHSIYDIPADEFGAALLRKNVHVCYAAFHFSENLLLEDSHVNLDEINACFSRDGDKLTFSFASESTLNYCHSYSNILKYVCKTYFPASNREVYMKEFLVTRVNTWFCKFSRIDTFLLYKGVAHKGVNSEQFYSAMEDAWHYKKTLAMCNSERILLEDSSSVNYWFPKMRDMVIVPLFDISLDTSKRTRKEVLVSKDFVFTVLNHIRTYQAKALTYSNVLSFVESIRSRVIINGVTARSEWDVDKSLLQSLSMTFFLHTKLAVLKDELLISKFSLGPKSVSQHVWDEISLAFGNAFPSIKERLLNRKLIKVSGDALEIRVPDLYVTFHDRLVTEYKTSVDMPVLDIRKRMEETEVMYNALSELSVLKESDKFDVDVFSRMCQTLEVDPMTAAKVIVAVMSNESGLTLTFEQPTEANVALALKDSEKASEGALVVTSRDVEEPSMKGSMARGELQLAGLSGDQPESSYTRNEEIESLEQFHMATASSLIRKQMSSIVYTGPIKVQQMKNFIDSLVASLSAAVSNLVKILKDTAAIDLETRQKFGVLDVATKRWLIKPLAKNHAWGVIETHARKYHVALLEYDEHGVVTCDSWRRVAVSSESMVYSDMAKLRTLRRLLRDGEPHVSSAKVVLVDGVPGCGKTKEILSKVNFEEDLILVPGKQAAEMIKRRANASGIIQATRDNVRTVDSFIMNYGKGTRCQFKRLFIDEGLMLHTGCVNFLVSMSLCEIAYVYGDTQQIPYINRVSGFPYPAHFAKIEVDEVETRRTTLRCPADITHYLNRRYEGYVMCTSSVKKSVSQEMVSGAAMINPVSKPLNGKVLTFTQSDKEALLSRGYTDVHTVHEVQGETYADVSLVRLTPTPVSIIAGDSPHVLVALSRHTQTLKYYTVVMDPLVSIIRDLEKLSSYLLDMYKVDAGTQXQLQVDSVFKGSNLFVAAPKTGDISDMQFYYDKCLPGNSTMLNNYDAVTMRLTDISLNVKDCILDFSKSVAAPKDPIKPLIPMVRTAAEMPRQTGLLENLVAMIKRNFNSPELSGIIDIENTASLVVDKFFDSYLLKEKRKPNKNVSLFCRESLNRWLEKQEQVTIGQLADFDFVDLPAVDQYRHMIKAQPKQKLDTSIQSEYPALQTIVYHSKKINAIFGPLFSELTRQMLESIDSSKFLFFTRKTPAQIEDFFGDLDSHVPMDILELDISKYDKSQNEFHCAVEYEIWRRLGLEDFLGEVWKQGHRKTTLKDYTAGIKTCLWYQRKSGDVTTFIGNTVIIAACLASMLPMEKIIKGAFCGDDSLLYFPKGCEFPDIQHTANLMWNFEAKLFRKQYGYFCGRYVIHHDRGCIVYYDPLKLISKLGAKHIKDWDHLEEFRRSLCDVANSLNNCAYYTQLDDAVSEVHKTAPPGSFVYKSLVKYLSDKVLFRSLFIDGSC.

Residues 72–281 (TFYNTQNAVH…HSYSNILKYV (210 aa)) enclose the Alphavirus-like MT domain. A (+)RNA virus helicase ATP-binding domain is found at 801–963 (MVYSDMAKLR…KIEVDEVETR (163 aa)). Position 833 to 840 (833 to 840 (GVPGCGKT)) interacts with a ribonucleoside 5'-triphosphate. Positions 964-1116 (RTTLRCPADI…DMYKVDAGTQ (153 aa)) constitute a (+)RNA virus helicase C-terminal domain. Residues 1380–1493 (MDILELDISK…YFPKGCEFPD (114 aa)) enclose the RdRp catalytic domain.

Belongs to the ssRNA positive-strand viruses RNA-directed RNA polymerase family. As to quaternary structure, heterodimer of a large and a small subunit.

It carries out the reaction RNA(n) + a ribonucleoside 5'-triphosphate = RNA(n+1) + diphosphate. The catalysed reaction is ATP + H2O = ADP + phosphate + H(+). Its function is as follows. Is an RNA-dependent RNA polymerase active in viral RNA replication. Is a methyltransferase active in RNA capping and an RNA helicase. Methyltransferase displays a cytoplasmic capping enzyme activity. This function is necessary since all viral RNAs are synthesized in the cytoplasm, and host capping enzymes are restricted to the nucleus. Helicase region probably exhibits NTPase and RNA unwinding activities. It also acts as a suppressor of RNA-mediated gene silencing, also known as post-transcriptional gene silencing (PTGS), a mechanism of plant viral defense that limits the accumulation of viral RNAs. May mediate silencing suppression through either inhibition of HEN1-mediated siRNA or siRNA demethylation. This Solanum lycopersicum (Tomato) protein is Replicase large subunit.